A 232-amino-acid polypeptide reads, in one-letter code: Phosphoribosylformylglycinamidine synthase subunit PurQ (232 aa).

A Glutamine amidotransferase type-1 domain is found at 2–232 (KIAIIQFGGT…SMADYITENF (231 aa)). Residue Cys86 is the Nucleophile of the active site. Active-site residues include His203 and Glu205.

In terms of assembly, part of the FGAM synthase complex composed of 1 PurL, 1 PurQ and 2 PurS subunits.

The protein resides in the cytoplasm. The catalysed reaction is N(2)-formyl-N(1)-(5-phospho-beta-D-ribosyl)glycinamide + L-glutamine + ATP + H2O = 2-formamido-N(1)-(5-O-phospho-beta-D-ribosyl)acetamidine + L-glutamate + ADP + phosphate + H(+). It carries out the reaction L-glutamine + H2O = L-glutamate + NH4(+). It participates in purine metabolism; IMP biosynthesis via de novo pathway; 5-amino-1-(5-phospho-D-ribosyl)imidazole from N(2)-formyl-N(1)-(5-phospho-D-ribosyl)glycinamide: step 1/2. Its function is as follows. Part of the phosphoribosylformylglycinamidine synthase complex involved in the purines biosynthetic pathway. Catalyzes the ATP-dependent conversion of formylglycinamide ribonucleotide (FGAR) and glutamine to yield formylglycinamidine ribonucleotide (FGAM) and glutamate. The FGAM synthase complex is composed of three subunits. PurQ produces an ammonia molecule by converting glutamine to glutamate. PurL transfers the ammonia molecule to FGAR to form FGAM in an ATP-dependent manner. PurS interacts with PurQ and PurL and is thought to assist in the transfer of the ammonia molecule from PurQ to PurL. The sequence is that of Phosphoribosylformylglycinamidine synthase subunit PurQ from Methanosarcina mazei (strain ATCC BAA-159 / DSM 3647 / Goe1 / Go1 / JCM 11833 / OCM 88) (Methanosarcina frisia).